Consider the following 152-residue polypeptide: UPF0179 protein HQ_3004A (152 aa).

This sequence belongs to the UPF0179 family.

This chain is UPF0179 protein HQ_3004A, found in Haloquadratum walsbyi (strain DSM 16790 / HBSQ001).